We begin with the raw amino-acid sequence, 520 residues long: CUGBP Elav-like family member 4 (520 aa).

RRM domains lie at 47–128 (IKLF…PADS), 135–215 (RKLF…FADT), and 435–513 (CNLF…LKRP).

Belongs to the CELF/BRUNOL family.

It is found in the nucleus. It localises to the cytoplasm. Functionally, RNA-binding protein that may be implicated in the regulation of pre-mRNA alternative splicing. This Danio rerio (Zebrafish) protein is CUGBP Elav-like family member 4 (celf4).